Reading from the N-terminus, the 200-residue chain is Probable fatty acid desaturase MIMI_L630 (200 aa).

Helical transmembrane passes span 9–29 (FIQI…YHWI) and 79–99 (IGPL…FIMI).

Belongs to the fatty acid desaturase CarF family.

Its subcellular location is the membrane. The protein is Probable fatty acid desaturase MIMI_L630 of Acanthamoeba polyphaga mimivirus (APMV).